A 216-amino-acid polypeptide reads, in one-letter code: Probable GTP-binding protein EngB (216 aa).

Residues 37-214 (GSVEIAFAGR…RAAMIRLLDE (178 aa)) enclose the EngB-type G domain. GTP is bound by residues 45-52 (GRSNVGKS), 72-76 (GRTQE), 92-95 (DMPG), 159-162 (TKAD), and 193-195 (TSS). Mg(2+)-binding residues include Ser52 and Thr74.

It belongs to the TRAFAC class TrmE-Era-EngA-EngB-Septin-like GTPase superfamily. EngB GTPase family. Mg(2+) is required as a cofactor.

Its function is as follows. Necessary for normal cell division and for the maintenance of normal septation. This chain is Probable GTP-binding protein EngB, found in Rhodopseudomonas palustris (strain TIE-1).